Here is a 396-residue protein sequence, read N- to C-terminus: Elongation factor Tu (396 aa).

In terms of domain architecture, tr-type G spans Lys10 to Glu206. Residues Gly19–Thr26 form a G1 region. Gly19–Thr26 serves as a coordination point for GTP. Thr26 contributes to the Mg(2+) binding site. The interval Gly60 to Ser64 is G2. The interval Asp81 to Gly84 is G3. Residues Asp81–His85 and Asn136–Asp139 contribute to the GTP site. Residues Asn136–Asp139 are G4. Residues Ser174–Leu176 form a G5 region.

It belongs to the TRAFAC class translation factor GTPase superfamily. Classic translation factor GTPase family. EF-Tu/EF-1A subfamily. Monomer.

Its subcellular location is the cytoplasm. The catalysed reaction is GTP + H2O = GDP + phosphate + H(+). In terms of biological role, GTP hydrolase that promotes the GTP-dependent binding of aminoacyl-tRNA to the A-site of ribosomes during protein biosynthesis. The sequence is that of Elongation factor Tu from Bradyrhizobium sp. (strain BTAi1 / ATCC BAA-1182).